Here is a 205-residue protein sequence, read N- to C-terminus: Small ribosomal subunit protein uS4 (205 aa).

An S4 RNA-binding domain is found at 94-157; it reads SRLDTVVYRM…KQIALIQESI (64 aa).

This sequence belongs to the universal ribosomal protein uS4 family. In terms of assembly, part of the 30S ribosomal subunit. Contacts protein S5. The interaction surface between S4 and S5 is involved in control of translational fidelity.

Functionally, one of the primary rRNA binding proteins, it binds directly to 16S rRNA where it nucleates assembly of the body of the 30S subunit. With S5 and S12 plays an important role in translational accuracy. This Rickettsia canadensis (strain McKiel) protein is Small ribosomal subunit protein uS4.